Here is a 692-residue protein sequence, read N- to C-terminus: Translation initiation factor IF-2 (692 aa).

Residues 51-114 (KAKPENAKKG…KPAETPGKIT (64 aa)) form a disordered region. The span at 59–84 (KGQNQKQSNNQQQNRQKQNQKNQSKP) shows a compositional bias: low complexity. Over residues 85-94 (NKNKKQKGPK) the composition is skewed to basic residues. Residues 193-362 (ERPAVVTIMG…LLVSEVEELK (170 aa)) enclose the tr-type G domain. The segment at 202–209 (GHVDHGKT) is G1. 202-209 (GHVDHGKT) contributes to the GTP binding site. A G2 region spans residues 227–231 (GITQH). The interval 248-251 (DTPG) is G3. GTP-binding positions include 248–252 (DTPGH) and 302–305 (NKMD). The interval 302–305 (NKMD) is G4. A G5 region spans residues 338–340 (SAI).

Belongs to the TRAFAC class translation factor GTPase superfamily. Classic translation factor GTPase family. IF-2 subfamily.

It localises to the cytoplasm. Its function is as follows. One of the essential components for the initiation of protein synthesis. Protects formylmethionyl-tRNA from spontaneous hydrolysis and promotes its binding to the 30S ribosomal subunits. Also involved in the hydrolysis of GTP during the formation of the 70S ribosomal complex. The polypeptide is Translation initiation factor IF-2 (Oceanobacillus iheyensis (strain DSM 14371 / CIP 107618 / JCM 11309 / KCTC 3954 / HTE831)).